The primary structure comprises 310 residues: Olfactory receptor 5P53 (310 aa).

The Extracellular portion of the chain corresponds to methionine 1 to isoleucine 25. N-linked (GlcNAc...) asparagine glycosylation occurs at asparagine 5. Residues valine 26–isoleucine 46 form a helical membrane-spanning segment. The Cytoplasmic segment spans residues threonine 47–glutamine 54. A helical membrane pass occupies residues leucine 55–threonine 75. Topologically, residues serine 76 to alanine 99 are extracellular. An intrachain disulfide couples cysteine 97 to cysteine 189. The helical transmembrane segment at glutamine 100 to tyrosine 120 threads the bilayer. Residues aspartate 121–serine 133 lie on the Cytoplasmic side of the membrane. Residues threonine 134 to methionine 154 traverse the membrane as a helical segment. Topologically, residues asparagine 155–glycine 196 are extracellular. A helical membrane pass occupies residues isoleucine 197–serine 217. Residues tyrosine 218 to alanine 237 lie on the Cytoplasmic side of the membrane. The helical transmembrane segment at phenylalanine 238 to isoleucine 258 threads the bilayer. Over tyrosine 259–asparagine 271 the chain is Extracellular. Asparagine 265 is a glycosylation site (N-linked (GlcNAc...) asparagine). Residues lysine 272 to leucine 292 form a helical membrane-spanning segment. Topologically, residues arginine 293 to serine 310 are cytoplasmic.

Belongs to the G-protein coupled receptor 1 family.

The protein resides in the cell membrane. Its function is as follows. Potential odorant receptor. The protein is Olfactory receptor 5P53 of Mus musculus (Mouse).